A 748-amino-acid chain; its full sequence is SNF-related serine/threonine-protein kinase (748 aa).

One can recognise a Protein kinase domain in the interval 16-269 (YDLDKTLGRG…LEEIESHPWL (254 aa)). ATP contacts are provided by residues 22–30 (LGRGHFAVV) and Lys45. The active-site Proton acceptor is the Asp139. Ser162 is subject to Phosphoserine. The residue at position 173 (Thr173) is a Phosphothreonine; by LKB1. A UBA domain is found at 291–334 (SEEEHNSIIQRMVLGDIADRDAIVEALETNRYNHITATYFLLAE). Residues Ser362, Ser390, Ser482, Ser495, and Ser518 each carry the phosphoserine modification. A disordered region spans residues 383 to 415 (SHATVPQSPARAGDNVLNGHRSKGLCDPAKKDE). A compositionally biased stretch (acidic residues) spans 491–503 (EEGESDDEFDMDE). Positions 491–640 (EEGESDDEFD…SPSPASASAA (150 aa)) are disordered. Basic residues predominate over residues 522–532 (VHKRYHRRKSQ). Residues 533–542 (GRGSSCSSSE) show a composition bias toward low complexity. Position 534 is an omega-N-methylarginine (Arg534). Residues 549-558 (ESRRRLDKDS) are compositionally biased toward basic and acidic residues. Gly residues-rich tracts occupy residues 575 to 592 (GSEG…GGGV) and 600 to 614 (QGTG…GGTP). Ser606 bears the Phosphoserine mark. Residues 629-640 (SSSPSPASASAA) show a composition bias toward low complexity.

The protein belongs to the protein kinase superfamily. CAMK Ser/Thr protein kinase family. Mg(2+) serves as cofactor. In terms of processing, autophosphorylated. Phosphorylation on Thr-173 by STK11/LKB1 in complex with STE20-related adapter-alpha (STRADA) pseudo kinase and CAB39. Ubiquitously expressed in all tissues examined.

Its subcellular location is the nucleus. It catalyses the reaction L-seryl-[protein] + ATP = O-phospho-L-seryl-[protein] + ADP + H(+). The enzyme catalyses L-threonyl-[protein] + ATP = O-phospho-L-threonyl-[protein] + ADP + H(+). With respect to regulation, activated by phosphorylation on Thr-173. Its function is as follows. May play a role in hematopoietic cell proliferation or differentiation. Potential mediator of neuronal apoptosis. The sequence is that of SNF-related serine/threonine-protein kinase from Mus musculus (Mouse).